Here is a 394-residue protein sequence, read N- to C-terminus: Elongation factor Tu 1 (394 aa).

Residues 10–204 (KPHVNVGTIG…YLDSYIPEPE (195 aa)) enclose the tr-type G domain. Positions 19–26 (GHVDHGKT) are G1. 19–26 (GHVDHGKT) is a binding site for GTP. A Mg(2+)-binding site is contributed by threonine 26. The tract at residues 60–64 (GITIN) is G2. Positions 81-84 (DCPG) are G3. Residues 81 to 85 (DCPGH) and 136 to 139 (NKCD) each bind GTP. Residues 136–139 (NKCD) are G4. The interval 174 to 176 (SAL) is G5.

It belongs to the TRAFAC class translation factor GTPase superfamily. Classic translation factor GTPase family. EF-Tu/EF-1A subfamily. Monomer.

It is found in the cytoplasm. It carries out the reaction GTP + H2O = GDP + phosphate + H(+). In terms of biological role, GTP hydrolase that promotes the GTP-dependent binding of aminoacyl-tRNA to the A-site of ribosomes during protein biosynthesis. The polypeptide is Elongation factor Tu 1 (Yersinia enterocolitica serotype O:8 / biotype 1B (strain NCTC 13174 / 8081)).